The primary structure comprises 349 residues: MCASFSPTLDSRSRQLLRTLISCYIQNGEPVGSKTLAQQAGLDISPATIRNILADLEELGLLNSPHTSAGRVPTAHGYRMFVDSLVQMQPPSEDDIRRLRVEMAGGGTQALLGNASEILSAMTHFVGVVSAPRREQFVFRHIDFVPLDARQIMAILIFADNEVQNRVIEPRRVYEPGELERVSNYLNAHFIGRTLADIRTTVLCELRKAKDEMEQLLAHSLDLASQMLVPNDSEDIVVTGQTRLMALQDLSDMDRLRELFEIFASKREILQLLERTINAPGVRIFIGEETGMVSMEDISLVTAPYAAHGQVLGVLGVIGPKRMAYDRVIPLVQVVAQVLGTALEPPTMP.

The protein belongs to the HrcA family.

In terms of biological role, negative regulator of class I heat shock genes (grpE-dnaK-dnaJ and groELS operons). Prevents heat-shock induction of these operons. The polypeptide is Heat-inducible transcription repressor HrcA (Xylella fastidiosa (strain 9a5c)).